The sequence spans 163 residues: Endoribonuclease YbeY (163 aa).

Zn(2+)-binding residues include H116, H120, and H126.

Belongs to the endoribonuclease YbeY family. Zn(2+) is required as a cofactor.

The protein resides in the cytoplasm. Single strand-specific metallo-endoribonuclease involved in late-stage 70S ribosome quality control and in maturation of the 3' terminus of the 16S rRNA. This Idiomarina loihiensis (strain ATCC BAA-735 / DSM 15497 / L2-TR) protein is Endoribonuclease YbeY.